A 177-amino-acid polypeptide reads, in one-letter code: MSRIGKKAVAVPSGVTVTIDGQTVTVKGPKGQLAWTVAEEIEVRQEGAEILLSKRDESTRAQAMWGLSRTLVNNMVVGVTQGYEQTLELVGVGYRAAMKGQALSMQLGFSHDVDVAPPAGITFATPKQTEIKISGIDKQLVGETAARIRRLRPPEPYKGKGVRYAGENVRRKEGKKK.

Positions 151 to 177 are disordered; the sequence is LRPPEPYKGKGVRYAGENVRRKEGKKK.

It belongs to the universal ribosomal protein uL6 family. As to quaternary structure, part of the 50S ribosomal subunit.

This protein binds to the 23S rRNA, and is important in its secondary structure. It is located near the subunit interface in the base of the L7/L12 stalk, and near the tRNA binding site of the peptidyltransferase center. The polypeptide is Large ribosomal subunit protein uL6 (Phenylobacterium zucineum (strain HLK1)).